The chain runs to 25 residues: C-type natriuretic peptide (25 aa).

A disulfide bridge links C9 with C25.

As to expression, venom gland.

It localises to the secreted. Its function is as follows. Snake venom natriuretic peptide that has a vasorelaxant activity in rat aortic strips and a diuretic potency in anesthetized rats. May act by activating natriuretic receptors (NPR1 and/or NPR2). The chain is C-type natriuretic peptide from Crotalus atrox (Western diamondback rattlesnake).